We begin with the raw amino-acid sequence, 283 residues long: Acetyl-coenzyme A carboxylase carboxyl transferase subunit beta (283 aa).

The CoA carboxyltransferase N-terminal domain occupies 27–283 (VWVKCERCGE…LLDLHLRGEK (257 aa)). Residues cysteine 31, cysteine 34, cysteine 50, and cysteine 53 each coordinate Zn(2+). The C4-type zinc-finger motif lies at 31 to 53 (CERCGEILFKKELDKNYKVCLKC).

The protein belongs to the AccD/PCCB family. Acetyl-CoA carboxylase is a heterohexamer composed of biotin carboxyl carrier protein (AccB), biotin carboxylase (AccC) and two subunits each of ACCase subunit alpha (AccA) and ACCase subunit beta (AccD). Requires Zn(2+) as cofactor.

Its subcellular location is the cytoplasm. The catalysed reaction is N(6)-carboxybiotinyl-L-lysyl-[protein] + acetyl-CoA = N(6)-biotinyl-L-lysyl-[protein] + malonyl-CoA. It functions in the pathway lipid metabolism; malonyl-CoA biosynthesis; malonyl-CoA from acetyl-CoA: step 1/1. In terms of biological role, component of the acetyl coenzyme A carboxylase (ACC) complex. Biotin carboxylase (BC) catalyzes the carboxylation of biotin on its carrier protein (BCCP) and then the CO(2) group is transferred by the transcarboxylase to acetyl-CoA to form malonyl-CoA. The polypeptide is Acetyl-coenzyme A carboxylase carboxyl transferase subunit beta (Pelotomaculum thermopropionicum (strain DSM 13744 / JCM 10971 / SI)).